A 191-amino-acid polypeptide reads, in one-letter code: Orotate phosphoribosyltransferase (191 aa).

E114–S122 is a 5-phospho-alpha-D-ribose 1-diphosphate binding site. The orotate site is built by T118 and R146.

The protein belongs to the purine/pyrimidine phosphoribosyltransferase family. PyrE subfamily. As to quaternary structure, homodimer. The cofactor is Mg(2+).

It catalyses the reaction orotidine 5'-phosphate + diphosphate = orotate + 5-phospho-alpha-D-ribose 1-diphosphate. It participates in pyrimidine metabolism; UMP biosynthesis via de novo pathway; UMP from orotate: step 1/2. Functionally, catalyzes the transfer of a ribosyl phosphate group from 5-phosphoribose 1-diphosphate to orotate, leading to the formation of orotidine monophosphate (OMP). This chain is Orotate phosphoribosyltransferase, found in Desulforamulus reducens (strain ATCC BAA-1160 / DSM 100696 / MI-1) (Desulfotomaculum reducens).